The following is a 403-amino-acid chain: 4-hydroxy-3-methylbut-2-en-1-yl diphosphate synthase (ferredoxin) (403 aa).

Cys312, Cys315, Cys346, and Glu353 together coordinate [4Fe-4S] cluster.

It belongs to the IspG family. Requires [4Fe-4S] cluster as cofactor.

It carries out the reaction (2E)-4-hydroxy-3-methylbut-2-enyl diphosphate + 2 oxidized [2Fe-2S]-[ferredoxin] + H2O = 2-C-methyl-D-erythritol 2,4-cyclic diphosphate + 2 reduced [2Fe-2S]-[ferredoxin] + H(+). The protein operates within isoprenoid biosynthesis; isopentenyl diphosphate biosynthesis via DXP pathway; isopentenyl diphosphate from 1-deoxy-D-xylulose 5-phosphate: step 5/6. In terms of biological role, converts 2C-methyl-D-erythritol 2,4-cyclodiphosphate (ME-2,4cPP) into 1-hydroxy-2-methyl-2-(E)-butenyl 4-diphosphate. The sequence is that of 4-hydroxy-3-methylbut-2-en-1-yl diphosphate synthase (ferredoxin) from Synechocystis sp. (strain ATCC 27184 / PCC 6803 / Kazusa).